Consider the following 212-residue polypeptide: Thiamine-phosphate synthase (212 aa).

4-amino-2-methyl-5-(diphosphooxymethyl)pyrimidine-binding positions include 39–41 (QLR) and Asn71. Mg(2+) is bound by residues Asp72 and Asp91. Position 110 (Ser110) interacts with 4-amino-2-methyl-5-(diphosphooxymethyl)pyrimidine. Position 136-138 (136-138 (TGT)) interacts with 2-[(2R,5Z)-2-carboxy-4-methylthiazol-5(2H)-ylidene]ethyl phosphate. Lys139 is a 4-amino-2-methyl-5-(diphosphooxymethyl)pyrimidine binding site. 2-[(2R,5Z)-2-carboxy-4-methylthiazol-5(2H)-ylidene]ethyl phosphate is bound by residues Gly167 and 187–188 (VS).

Belongs to the thiamine-phosphate synthase family. It depends on Mg(2+) as a cofactor.

The enzyme catalyses 2-[(2R,5Z)-2-carboxy-4-methylthiazol-5(2H)-ylidene]ethyl phosphate + 4-amino-2-methyl-5-(diphosphooxymethyl)pyrimidine + 2 H(+) = thiamine phosphate + CO2 + diphosphate. It carries out the reaction 2-(2-carboxy-4-methylthiazol-5-yl)ethyl phosphate + 4-amino-2-methyl-5-(diphosphooxymethyl)pyrimidine + 2 H(+) = thiamine phosphate + CO2 + diphosphate. The catalysed reaction is 4-methyl-5-(2-phosphooxyethyl)-thiazole + 4-amino-2-methyl-5-(diphosphooxymethyl)pyrimidine + H(+) = thiamine phosphate + diphosphate. The protein operates within cofactor biosynthesis; thiamine diphosphate biosynthesis; thiamine phosphate from 4-amino-2-methyl-5-diphosphomethylpyrimidine and 4-methyl-5-(2-phosphoethyl)-thiazole: step 1/1. Functionally, condenses 4-methyl-5-(beta-hydroxyethyl)thiazole monophosphate (THZ-P) and 2-methyl-4-amino-5-hydroxymethyl pyrimidine pyrophosphate (HMP-PP) to form thiamine monophosphate (TMP). The protein is Thiamine-phosphate synthase of Azorhizobium caulinodans (strain ATCC 43989 / DSM 5975 / JCM 20966 / LMG 6465 / NBRC 14845 / NCIMB 13405 / ORS 571).